The chain runs to 336 residues: D-altritol 5-dehydrogenase (336 aa).

Residues cysteine 37, histidine 59, glutamate 60, cysteine 89, cysteine 92, cysteine 95, and cysteine 103 each coordinate Zn(2+).

The protein belongs to the zinc-containing alcohol dehydrogenase family. It depends on Zn(2+) as a cofactor.

The enzyme catalyses D-altritol + NAD(+) = keto-D-tagatose + NADH + H(+). It participates in carbohydrate metabolism. Involved in D-altritol catabolism. Catalyzes the oxidation of D-altritol to D-tagatose. The polypeptide is D-altritol 5-dehydrogenase (Agrobacterium fabrum (strain C58 / ATCC 33970) (Agrobacterium tumefaciens (strain C58))).